The primary structure comprises 420 residues: Histidine--tRNA ligase (420 aa).

This sequence belongs to the class-II aminoacyl-tRNA synthetase family. Homodimer.

It is found in the cytoplasm. It catalyses the reaction tRNA(His) + L-histidine + ATP = L-histidyl-tRNA(His) + AMP + diphosphate + H(+). This chain is Histidine--tRNA ligase, found in Desulforudis audaxviator (strain MP104C).